A 415-amino-acid polypeptide reads, in one-letter code: MQDLTINAIGAQGDGLARTADGKPAFVPLTLPGEVVRAKMDGARGEVVEILAPSPERVAPACRHYGVCGGCALQHWAAEPYRAWKAEQVRLQLSMEGLETEILPTFAAPPASRRRVALHARKGGKGQGARLGFKERRSWNLVSIEECPVTDPRLVAALPALARLAEPFLEHPKSAPTLHVTLTATGLDIDITGVERKSGGLSADARMRAAMAAGEGDFARVTLAGETIYGARQPLVKLGQAVVALPPGSFLQAVPAAEKAMVELAVAEAQGASRVADLYCGVGTFTFPLAEVAQVYAAEMSAPAITALKAAIGGAPGLKPITAEARDLVRRPVLSTELAKTDVVVIDPPRAGAAEQTVEIAKSKVAKVLGVSCNPQTFAKDARVLVDAGFKLVRVTPVDQFVWSPHIELVGVFTR.

The TRAM domain maps to 1-52; that stretch reads MQDLTINAIGAQGDGLARTADGKPAFVPLTLPGEVVRAKMDGARGEVVEILA. [4Fe-4S] cluster contacts are provided by Cys-62, Cys-68, Cys-71, and Cys-147. S-adenosyl-L-methionine contacts are provided by Gln-252, Tyr-279, Glu-299, and Asp-347. Catalysis depends on Cys-373, which acts as the Nucleophile.

It belongs to the class I-like SAM-binding methyltransferase superfamily. RNA M5U methyltransferase family.

This is an uncharacterized protein from Caulobacter vibrioides (strain ATCC 19089 / CIP 103742 / CB 15) (Caulobacter crescentus).